The following is an 888-amino-acid chain: Glutamate receptor 3 (888 aa).

Positions 1-22 (MGQSVLRAVFFLVLGLLGHSHG) are cleaved as a signal peptide. Topologically, residues 23 to 546 (GFPNTISIGG…GVFSFLDPLA (524 aa)) are extracellular. 5 N-linked (GlcNAc...) asparagine glycosylation sites follow: Asn-57, Asn-260, Asn-374, Asn-409, and Asn-416. The cysteines at positions 85 and 334 are disulfide-linked. 3 residues coordinate L-glutamate: Pro-502, Thr-504, and Arg-509. The helical transmembrane segment at 547-567 (YEIWMCIVFAYIGVSVVLFLV) threads the bilayer. Residues 568 to 596 (SRFSPYEWHLEDNNEEPRDPQSPPDPPNE) lie on the Cytoplasmic side of the membrane. The helical; Pore-forming intramembrane region spans 597–612 (FGIFNSLWFSLGAFMQ). Residues 613–615 (QGC) lie within the membrane without spanning it. A lipid anchor (S-palmitoyl cysteine) is attached at Cys-615. The Cytoplasmic portion of the chain corresponds to 616–621 (DISPRS). Residues 622–642 (LSGRIVGGVWWFFTLIIISSY) form a helical membrane-spanning segment. The Extracellular portion of the chain corresponds to 643 to 817 (TANLAAFLTV…DKTSALSLSN (175 aa)). Ser-680, Thr-681, and Glu-731 together coordinate L-glutamate. Cys-744 and Cys-799 are joined by a disulfide. Residues 818–838 (VAGVFYILVGGLGLAMMVALI) traverse the membrane as a helical segment. The Cytoplasmic portion of the chain corresponds to 839 to 888 (EFCYKSRAESKRMKLTKNTQNFKPAPATNTQNYATYREGYNVYGTESVKI). The S-palmitoyl cysteine moiety is linked to residue Cys-841. 2 positions are modified to phosphotyrosine: Tyr-871 and Tyr-881.

It belongs to the glutamate-gated ion channel (TC 1.A.10.1) family. GRIA3 subfamily. Homotetramer or heterotetramer of pore-forming glutamate receptor subunits. Tetramers may be formed by the dimerization of dimers. Interacts with PICK1, GRIP1 and GRIP2. Found in a complex with GRIA1, GRIA2, GRIA4, CNIH2, CNIH3, CACNG2, CACNG3, CACNG4, CACNG5, CACNG7 and CACNG8. Interacts with CACNG5. Found in a complex with GRIA1, GRIA2, GRIA4, DLG4, CACNG8 and CNIH2.

It is found in the cell membrane. Its subcellular location is the postsynaptic cell membrane. The protein localises to the postsynaptic density membrane. The catalysed reaction is Ca(2+)(in) = Ca(2+)(out). Functionally, ionotropic glutamate receptor that functions as a ligand-gated cation channel, gated by L-glutamate and glutamatergic agonists such as alpha-amino-3-hydroxy-5-methyl-4-isoxazolepropionic acid (AMPA), quisqualic acid, and kainic acid. L-glutamate acts as an excitatory neurotransmitter at many synapses in the central nervous system and plays an important role in fast excitatory synaptic transmission by inducing long-term potentiation. Binding of the excitatory neurotransmitter L-glutamate induces a conformation change, leading to the opening of the cation channel, and thereby converts the chemical signal to an electrical impulse upon entry of calcium. The receptor then desensitizes rapidly and enters a transient inactive state, characterized by the presence of bound agonist. In the presence of CACNG8, shows resensitization which is characterized by a delayed accumulation of current flux upon continued application of glutamate. This is Glutamate receptor 3 from Mus musculus (Mouse).